We begin with the raw amino-acid sequence, 89 residues long: Protein RALF-like 5 (89 aa).

The N-terminal stretch at M1–A25 is a signal peptide. 2 cysteine pairs are disulfide-bonded: C39–C48 and C61–C67.

This sequence belongs to the plant rapid alkalinization factor (RALF) family.

It is found in the secreted. Its function is as follows. Cell signaling peptide that may regulate plant stress, growth, and development. Mediates a rapid alkalinization of extracellular space by mediating a transient increase in the cytoplasmic Ca(2+) concentration leading to a calcium-dependent signaling events through a cell surface receptor and a concomitant activation of some intracellular mitogen-activated protein kinases. In Arabidopsis thaliana (Mouse-ear cress), this protein is Protein RALF-like 5 (RALFL5).